The following is a 156-amino-acid chain: Flagellar assembly factor FliW (156 aa).

The protein belongs to the FliW family. In terms of assembly, interacts with translational regulator CsrA and flagellin(s).

The protein resides in the cytoplasm. Its function is as follows. Acts as an anti-CsrA protein, binds CsrA and prevents it from repressing translation of its target genes, one of which is flagellin. Binds to flagellin and participates in the assembly of the flagellum. This chain is Flagellar assembly factor FliW, found in Lachnoclostridium phytofermentans (strain ATCC 700394 / DSM 18823 / ISDg) (Clostridium phytofermentans).